The following is a 321-amino-acid chain: uncharacterized protein (321 aa).

The active-site Proton donor is the Y60. H118 lines the substrate pocket.

Belongs to the aldo/keto reductase family.

This is an uncharacterized protein from Schizosaccharomyces pombe (strain 972 / ATCC 24843) (Fission yeast).